The chain runs to 279 residues: Diaminopimelate epimerase (279 aa).

3 residues coordinate substrate: Asn-12, Gln-45, and Asn-65. Cys-74 (proton donor) is an active-site residue. Residues Gly-75–Asn-76, Asn-162, Asn-195, and Glu-213–Arg-214 each bind substrate. Catalysis depends on Cys-222, which acts as the Proton acceptor. A substrate-binding site is contributed by Gly-223–Ser-224.

The protein belongs to the diaminopimelate epimerase family. Homodimer.

The protein resides in the cytoplasm. The catalysed reaction is (2S,6S)-2,6-diaminopimelate = meso-2,6-diaminopimelate. Its pathway is amino-acid biosynthesis; L-lysine biosynthesis via DAP pathway; DL-2,6-diaminopimelate from LL-2,6-diaminopimelate: step 1/1. Catalyzes the stereoinversion of LL-2,6-diaminopimelate (L,L-DAP) to meso-diaminopimelate (meso-DAP), a precursor of L-lysine and an essential component of the bacterial peptidoglycan. This is Diaminopimelate epimerase from Shewanella loihica (strain ATCC BAA-1088 / PV-4).